Reading from the N-terminus, the 353-residue chain is MAGGKIRKEKPKASNRAPSNHYQGGISFHKSKGQHILKNPLLVDSIVQKAGIKSTDVILEIGPGTGNLTKKLLEAGKEVIAVELDSRMVLELQRRFQGTPFSNRLKVIQGDVLKTELPRFDICVANIPYQISSPLTFKLLFHPTSFRCAVIMYQREFAMRLVAQPGDNLYCRLSVNTQLYARVSHLLKVGKNNFRPPPKVDSSVVRIEPRRPGPQVNKKEWDGFLRVCFIRKNKTLGSIFKQKSVLSMLEKNFKTLQAVLASLQNNGEPALNTTSMDLGDQSMGMEDDDNEMDDDDMEMDEGEGDGGETSEFKEKVMNVLKEGGFEEKRSSKLSQQEFLYLLSLFNKSGIHFT.

Residues 1–10 (MAGGKIRKEK) show a composition bias toward basic residues. Residues 1 to 23 (MAGGKIRKEKPKASNRAPSNHYQ) form a disordered region. Residues His-35, Leu-37, Gly-62, Glu-83, Asp-111, and Asn-126 each coordinate S-adenosyl-L-methionine. Positions 270 to 313 (ALNTTSMDLGDQSMGMEDDDNEMDDDDMEMDEGEGDGGETSEFK) are disordered. The segment covering 285–308 (MEDDDNEMDDDDMEMDEGEGDGGE) has biased composition (acidic residues).

It belongs to the class I-like SAM-binding methyltransferase superfamily. rRNA adenine N(6)-methyltransferase family. In terms of tissue distribution, expressed in rapidly dividing tissues, including root meristems and lateral root primordia, developing cotyledons and leaves, petals, anther, pollen grains and silique abscission zone.

The protein resides in the nucleus. Its subcellular location is the nucleolus. It carries out the reaction adenosine(1785)/adenosine(1786) in 18S rRNA + 4 S-adenosyl-L-methionine = N(6)-dimethyladenosine(1785)/N(6)-dimethyladenosine(1786) in 18S rRNA + 4 S-adenosyl-L-homocysteine + 4 H(+). N6-adenine methyltransferase which modifies the AA dinucleotide at the plant nuclear 18S rRNA nucleotides A1785 and A1786. Required for generating appropriate patterns of gene expression during root development, including the cell-specific expression of transcriptional regulators involved in root hair and non-hair cells patterning. This Arabidopsis thaliana (Mouse-ear cress) protein is Ribosomal RNA small subunit methyltransferase.